The following is a 339-amino-acid chain: D-erythrose-4-phosphate dehydrogenase (339 aa).

11 to 12 is an NAD(+) binding site; sequence RI. Substrate contacts are provided by residues 153-155, Arg199, 212-213, and Arg235; these read SCT and TK. Cys154 acts as the Nucleophile in catalysis. An NAD(+)-binding site is contributed by Asn317.

The protein belongs to the glyceraldehyde-3-phosphate dehydrogenase family. Epd subfamily. As to quaternary structure, homotetramer.

The protein resides in the cytoplasm. It carries out the reaction D-erythrose 4-phosphate + NAD(+) + H2O = 4-phospho-D-erythronate + NADH + 2 H(+). It participates in cofactor biosynthesis; pyridoxine 5'-phosphate biosynthesis; pyridoxine 5'-phosphate from D-erythrose 4-phosphate: step 1/5. Functionally, catalyzes the NAD-dependent conversion of D-erythrose 4-phosphate to 4-phosphoerythronate. This is D-erythrose-4-phosphate dehydrogenase from Shewanella halifaxensis (strain HAW-EB4).